The chain runs to 606 residues: Electron transfer flavoprotein-ubiquinone oxidoreductase, mitochondrial (606 aa).

59 to 73 (VVIVGAGPSGLSTAI) contributes to the FAD binding site. Residues 448–468 (PSLHWGTIPGLIYGALEMYIF) form a helical membrane-spanning segment. Positions 551, 575, 578, and 581 each coordinate [4Fe-4S] cluster.

Belongs to the ETF-QO/FixC family. As to quaternary structure, monomer. [4Fe-4S] cluster is required as a cofactor. The cofactor is FAD.

The protein resides in the mitochondrion inner membrane. The enzyme catalyses a ubiquinone + reduced [electron-transfer flavoprotein] = a ubiquinol + oxidized [electron-transfer flavoprotein] + H(+). Its function is as follows. Accepts electrons from ETF and reduces ubiquinone. This is Electron transfer flavoprotein-ubiquinone oxidoreductase, mitochondrial (etfdh) from Dictyostelium discoideum (Social amoeba).